Consider the following 349-residue polypeptide: Pinopsin (349 aa).

Residues Met1 to Pro16 show a composition bias toward polar residues. A disordered region spans residues Met1–Pro22. At Met1–Met32 the chain is on the extracellular side. The chain crosses the membrane as a helical span at residues Tyr33–Val57. The Cytoplasmic segment spans residues Ser58–Asn69. Residues Tyr70 to Asn94 form a helical membrane-spanning segment. The Extracellular portion of the chain corresponds to Ile95–Glu109. Cys106 and Cys183 are disulfide-bonded. A helical membrane pass occupies residues Gly110–Leu129. Residues Glu130 to His148 are Cytoplasmic-facing. A helical transmembrane segment spans residues Ala149 to Ser172. Residues Ser173–Ser196 lie on the Extracellular side of the membrane. N-linked (GlcNAc...) asparagine glycosylation occurs at Asn194. A helical transmembrane segment spans residues Tyr197–Leu224. At Arg225–Arg246 the chain is on the cytoplasmic side. The chain crosses the membrane as a helical span at residues Met247 to Ala270. The Extracellular segment spans residues Thr271–Gln278. A helical transmembrane segment spans residues Pro279 to Met303. Residue Lys290 is modified to N6-(retinylidene)lysine. The Cytoplasmic segment spans residues Asn304–Val349. S-palmitoyl cysteine attachment occurs at residues Cys316 and Cys317. The interval Gly325–Val349 is disordered.

Belongs to the G-protein coupled receptor 1 family. Opsin subfamily. Post-translationally, phosphorylated on some or all of the serine and threonine residues present in the C-terminal region. Pineal gland.

It is found in the membrane. In terms of biological role, produces a slow and prolonged phototransduction response consistent with the non-visual function of pineal photoreception. This Columba livia (Rock dove) protein is Pinopsin.